We begin with the raw amino-acid sequence, 763 residues long: Probable portal protein (763 aa).

Over residues 668 to 679 (GTKHARDLEKMK) the composition is skewed to basic and acidic residues. Disordered stretches follow at residues 668-706 (GTKH…LPPN) and 729-763 (ERDI…RLGN). Residues 680–689 (AQSQGNQQLE) are compositionally biased toward polar residues.

In terms of assembly, homododecamer.

The protein localises to the virion. Functionally, forms the portal vertex of the capsid. This portal plays critical roles in head assembly, genome packaging, neck/tail attachment, and genome ejection. The portal protein multimerizes as a single ring-shaped homododecamer arranged around a central channel. In Escherichia coli (Bacteriophage N4), this protein is Probable portal protein (59).